The sequence spans 407 residues: tRNA pseudouridine synthase Pus10 (407 aa).

Aspartate 232 functions as the Nucleophile in the catalytic mechanism. Residues tyrosine 300 and tyrosine 369 each contribute to the substrate site.

It belongs to the pseudouridine synthase Pus10 family.

It catalyses the reaction uridine(54) in tRNA = pseudouridine(54) in tRNA. The catalysed reaction is uridine(55) in tRNA = pseudouridine(55) in tRNA. Its function is as follows. Responsible for synthesis of pseudouridine from uracil-54 and uracil-55 in the psi GC loop of transfer RNAs. This is tRNA pseudouridine synthase Pus10 from Methanosphaera stadtmanae (strain ATCC 43021 / DSM 3091 / JCM 11832 / MCB-3).